Consider the following 465-residue polypeptide: COP9 signalosome complex subunit 5 (465 aa).

Residues 74–216 (VLLSKLACSK…IGSFRTYQDQ (143 aa)) enclose the MPN domain. Residues H162, H164, and D175 each coordinate Zn(2+). A JAMM motif motif is present at residues 162 to 175 (HSHPGYDCWLSNID). Positions 364-386 (SSIHTQMNNQNNQQERNSPKRPH) are disordered.

Belongs to the peptidase M67A family. CSN5 subfamily. As to quaternary structure, component of the COP9 signalosome (CSN) complex.

Its subcellular location is the cytoplasm. It localises to the nucleus. Its function is as follows. Catalytic Component of the COP9 signalosome (CSN) complex that acts as an regulator of the ubiquitin (Ubl) conjugation pathway by mediating the deneddylation of the cullin subunit of SCF-type E3 ubiquitin-protein ligase complexes. The protein is COP9 signalosome complex subunit 5 (RRI1) of Candida glabrata (strain ATCC 2001 / BCRC 20586 / JCM 3761 / NBRC 0622 / NRRL Y-65 / CBS 138) (Yeast).